The following is a 151-amino-acid chain: MASSSSRGEMEKMGIDQLKALKEQADLEVNLLQDSLNNIRTATVRLDAAAAALNDLSLRPQGKKMLVPLTASLYVPGTLDEADKVLVDIGTGYFIEKTMDDGKDYCQRKINLLKSNFDQLFEVAAKKKSVADEAGMVLQAKVKQLTAATTS.

Residues 15-35 (IDQLKALKEQADLEVNLLQDS) adopt a coiled-coil conformation.

This sequence belongs to the prefoldin subunit alpha family. Heterohexamer of two PFD-alpha type and four PFD-beta type subunits forming prefoldin co-chaperone complex. Interacts with PFD6. Binds to the DELLA protein GAI.

Its subcellular location is the cytoplasm. The protein localises to the nucleus. Functionally, binds specifically to cytosolic chaperonin (c-CPN) and transfers target proteins to it. Binds to nascent polypeptide chain and promotes folding in an environment in which there are many competing pathways for nonnative proteins. Together with other chaperonins, contribute to the regulation of gene expression by modulating the spliceosome function on pre-mRNA splicing post-transcriptionally by acting as a co-chaperone of Hsp90 to control levels of LSM8. Required for the biogenesis of tubulins and for subsequent microtubules (MTs) organization and dynamicity. Necessary for tolerance to NaCl salt stress. Involved in the process leading to microtubules dissociation in response to gibberellic acid (GA) probably due to the DELLA proteins-mediated translocation of the prefoldin co-chaperone complex from the cytoplasm to the nucleus. Prevents cold acclimation (e.g. 7 days at 4 degrees Celsius) in a DELLA proteins-dependent manner by promoting nuclear proteasome-mediated HY5 degradation, thus modulating the expression of several genes and reducing anthocyanin biosynthesis, but seems not involved in constitutive freezing tolerance. Contributes to the GA-dependent regulation of PIN2 trafficking at the plasma membrane, thus influencing auxin flux. The polypeptide is Prefoldin subunit 5 (Arabidopsis thaliana (Mouse-ear cress)).